A 411-amino-acid polypeptide reads, in one-letter code: Serine hydroxymethyltransferase (411 aa).

(6S)-5,6,7,8-tetrahydrofolate is bound by residues leucine 117 and 121–123; that span reads GHL. An N6-(pyridoxal phosphate)lysine modification is found at lysine 226. (6S)-5,6,7,8-tetrahydrofolate is bound by residues glutamate 241 and 349–351; that span reads SPF.

This sequence belongs to the SHMT family. As to quaternary structure, homodimer. Pyridoxal 5'-phosphate is required as a cofactor.

It is found in the cytoplasm. The enzyme catalyses (6R)-5,10-methylene-5,6,7,8-tetrahydrofolate + glycine + H2O = (6S)-5,6,7,8-tetrahydrofolate + L-serine. Its pathway is one-carbon metabolism; tetrahydrofolate interconversion. It functions in the pathway amino-acid biosynthesis; glycine biosynthesis; glycine from L-serine: step 1/1. Its function is as follows. Catalyzes the reversible interconversion of serine and glycine with tetrahydrofolate (THF) serving as the one-carbon carrier. This reaction serves as the major source of one-carbon groups required for the biosynthesis of purines, thymidylate, methionine, and other important biomolecules. Also exhibits THF-independent aldolase activity toward beta-hydroxyamino acids, producing glycine and aldehydes, via a retro-aldol mechanism. The polypeptide is Serine hydroxymethyltransferase (Oceanobacillus iheyensis (strain DSM 14371 / CIP 107618 / JCM 11309 / KCTC 3954 / HTE831)).